The sequence spans 402 residues: NADH-quinone oxidoreductase subunit D (402 aa).

Belongs to the complex I 49 kDa subunit family. In terms of assembly, NDH-1 is composed of 14 different subunits. Subunits NuoB, C, D, E, F, and G constitute the peripheral sector of the complex.

It localises to the cell inner membrane. It carries out the reaction a quinone + NADH + 5 H(+)(in) = a quinol + NAD(+) + 4 H(+)(out). In terms of biological role, NDH-1 shuttles electrons from NADH, via FMN and iron-sulfur (Fe-S) centers, to quinones in the respiratory chain. The immediate electron acceptor for the enzyme in this species is believed to be ubiquinone. Couples the redox reaction to proton translocation (for every two electrons transferred, four hydrogen ions are translocated across the cytoplasmic membrane), and thus conserves the redox energy in a proton gradient. This chain is NADH-quinone oxidoreductase subunit D, found in Rhodopseudomonas palustris (strain ATCC BAA-98 / CGA009).